Reading from the N-terminus, the 525-residue chain is GMP synthase [glutamine-hydrolyzing] (525 aa).

Residues 9–207 (RILILDFGSQ…VVDICKCEKL (199 aa)) form the Glutamine amidotransferase type-1 domain. Cys86 functions as the Nucleophile in the catalytic mechanism. Residues His181 and Glu183 contribute to the active site. Residues 208–400 (WTSASIIDDA…LGLPYDMLYR (193 aa)) form the GMPS ATP-PPase domain. 235 to 241 (SGGVDSS) is an ATP binding site.

In terms of assembly, homodimer.

The catalysed reaction is XMP + L-glutamine + ATP + H2O = GMP + L-glutamate + AMP + diphosphate + 2 H(+). The protein operates within purine metabolism; GMP biosynthesis; GMP from XMP (L-Gln route): step 1/1. Catalyzes the synthesis of GMP from XMP. The chain is GMP synthase [glutamine-hydrolyzing] from Colwellia psychrerythraea (strain 34H / ATCC BAA-681) (Vibrio psychroerythus).